Consider the following 415-residue polypeptide: Phosphoglycerate kinase (415 aa).

Substrate-binding positions include 24–26, arginine 39, 62–65, arginine 121, and arginine 161; these read DLN and HLGR. ATP contacts are provided by residues lysine 211, glycine 307, glutamate 338, and 367–370; that span reads GGDS.

This sequence belongs to the phosphoglycerate kinase family. Monomer.

The protein resides in the cytoplasm. The catalysed reaction is (2R)-3-phosphoglycerate + ATP = (2R)-3-phospho-glyceroyl phosphate + ADP. Its pathway is carbohydrate degradation; glycolysis; pyruvate from D-glyceraldehyde 3-phosphate: step 2/5. This Micrococcus luteus (strain ATCC 4698 / DSM 20030 / JCM 1464 / CCM 169 / CCUG 5858 / IAM 1056 / NBRC 3333 / NCIMB 9278 / NCTC 2665 / VKM Ac-2230) (Micrococcus lysodeikticus) protein is Phosphoglycerate kinase.